A 374-amino-acid chain; its full sequence is Peptide chain release factor 2 (374 aa).

An N5-methylglutamine modification is found at Gln252.

The protein belongs to the prokaryotic/mitochondrial release factor family. Post-translationally, methylated by PrmC. Methylation increases the termination efficiency of RF2.

The protein resides in the cytoplasm. Peptide chain release factor 2 directs the termination of translation in response to the peptide chain termination codons UGA and UAA. This Stenotrophomonas maltophilia (strain R551-3) protein is Peptide chain release factor 2.